Consider the following 448-residue polypeptide: Chaperone SurA (448 aa).

The N-terminal stretch at 1-27 (MKKTLRFAAVASGLVASLITVAPSASA) is a signal peptide. PpiC domains follow at residues 185–288 (QQDL…RLVE) and 301–399 (IVQT…QVLG).

It localises to the periplasm. It carries out the reaction [protein]-peptidylproline (omega=180) = [protein]-peptidylproline (omega=0). Chaperone involved in the correct folding and assembly of outer membrane proteins. Recognizes specific patterns of aromatic residues and the orientation of their side chains, which are found more frequently in integral outer membrane proteins. May act in both early periplasmic and late outer membrane-associated steps of protein maturation. The protein is Chaperone SurA of Burkholderia mallei (strain ATCC 23344).